A 516-amino-acid polypeptide reads, in one-letter code: Cytochrome P450 monooxygenase lcsI (516 aa).

A helical membrane pass occupies residues 20–42 (ICVAAGCAFALSLLYLYVRALYL). N-linked (GlcNAc...) asparagine glycans are attached at residues Asn131, Asn184, Asn415, Asn420, and Asn442. Cys456 lines the heme pocket.

It belongs to the cytochrome P450 family. It depends on heme as a cofactor.

It localises to the membrane. The protein operates within secondary metabolite biosynthesis. In terms of biological role, cytochrome P450 monooxygenase; part of the gene cluster that mediates the biosynthesis of the lipopeptide antibiotics leucinostatins that show extensive biological activities, including antimalarial, antiviral, antibacterial, antifungal, and antitumor activities, as well as phytotoxic. Leucinostatin A contains nine amino acid residues, including the unusual amino acid 4-methyl-L-proline (MePro), 2-amino-6-hydroxy-4-methyl-8-oxodecanoic acid (AHyMeOA), 3-hydroxyleucine (HyLeu), alpha-aminoisobutyric acid (AIB), beta-Ala, a 4-methylhex-2-enoic acid at the N-terminus as well as a N1,N1-dimethylpropane-1,2-diamine (DPD) at the C-terminus. The biosynthesis of leucinostatins is probably initiated with the assembly of 4-methylhex-2-enoic acid by a reducing PKS. Two reducing polyketide synthases, lcsB and lcsC, have been identified in the cluster and it is not clear which is the one that assembles 4-methylhex-2-enoic acid since both contain KS, AT, DH, cMT, ER, KR and ACP domains. The polyketide residue might be transferred to the NRPS lcsA, mediated by two additional enzymes, the acyl-CoA ligase lcsD and the thioesterase lcsE. The linear polyketide carboxylic acid, which is released from PKS, is converted to a CoA thioester by lcsD, and then lcsE hydrolyzes the thiol bond and shuttles the polyketide intermediate to lcsA. The C domain of the first module catalyzed the condensation of 4-methylhex-2-enoic acid and MePro carried by domain A1, followed by successive condensations of nine amino acids to trigger the elongation of the linear peptide. A5 and A6 domains of lcsA are proposed to incorporate leucine, A2 AHyMeOA, and A3 incorporates HyLeu. A4, A7 and A8 incorporate AIB. The AHyMeOA in leucinostatin A activated by the A2 might be produced by the second PKS (lcsB or lcsC) present within the cluster. The MePro is probably produced via leucine cyclization and may originate from a separate pathway, independent of the cluster. Another nonproteinogenic amino acid, beta-Ala, could be produced by an aspartic acid decarboxylase also localized outside of the cluster. Two candidates are VFPBJ_01400 and VFPBJ_10476. The final peptide scaffold may be released by the NAD(P)H-dependent thioester reductase (TE) at the C-terminal region of lcsA. Transamination of the lcsA product by the transaminase lcsP may produce DPD at the C-terminus. Further hydroxylation steps performed alternatively by the cytochrome P450 monooxygenases lcsI, lcsK and lcsN then yield the non-methylated leucinostatins precursor. It is also possible that leucines can be hydroxylated prior to their incorporation into the peptide. Varying extents of methylation then lead to the formation of leucinostatins A and B. This chain is Cytochrome P450 monooxygenase lcsI, found in Purpureocillium lilacinum (Paecilomyces lilacinus).